The chain runs to 173 residues: Shikimate kinase 1 (173 aa).

Gly14–Thr19 is an ATP binding site. Position 18 (Ser18) interacts with Mg(2+). Residues Asp36, Arg60, and Gly82 each contribute to the substrate site. Residue Arg120 coordinates ATP. Arg140 lines the substrate pocket. Gln157 serves as a coordination point for ATP.

This sequence belongs to the shikimate kinase family. In terms of assembly, monomer. Requires Mg(2+) as cofactor.

It localises to the cytoplasm. It catalyses the reaction shikimate + ATP = 3-phosphoshikimate + ADP + H(+). It participates in metabolic intermediate biosynthesis; chorismate biosynthesis; chorismate from D-erythrose 4-phosphate and phosphoenolpyruvate: step 5/7. Functionally, catalyzes the specific phosphorylation of the 3-hydroxyl group of shikimic acid using ATP as a cosubstrate. The chain is Shikimate kinase 1 from Enterobacter sp. (strain 638).